The chain runs to 279 residues: Succinate dehydrogenase [ubiquinone] iron-sulfur subunit 1, mitochondrial (279 aa).

A mitochondrion-targeting transit peptide spans 1 to 28 (MASGLIGRLVGTKPSKLATAARLIPARW). In terms of domain architecture, 2Fe-2S ferredoxin-type spans 52 to 141 (FQIYRWNPDN…ETTITPLPHM (90 aa)). Residues Cys102, Cys107, and Cys122 each contribute to the [2Fe-2S] cluster site. Residues 184–214 (DRAKLDGMYECILCACCSTSCPSYWWNPESY) enclose the 4Fe-4S ferredoxin-type domain. Residues Cys194, Cys197, and Cys200 each coordinate [4Fe-4S] cluster. Cys204 is a [3Fe-4S] cluster binding site. Trp209 is an a ubiquinone binding site. Residues Cys251 and Cys257 each coordinate [3Fe-4S] cluster. Cys261 contributes to the [4Fe-4S] cluster binding site.

This sequence belongs to the succinate dehydrogenase/fumarate reductase iron-sulfur protein family. Component of complex II composed of eight subunits in plants: four classical SDH subunits SDH1, SDH2, SDH3 and SDH4 (a flavoprotein (FP), an iron-sulfur protein (IP), and a cytochrome b composed of a large and a small subunit.), as well as four subunits unknown in mitochondria from bacteria and heterotrophic eukaryotes. The cofactor is [2Fe-2S] cluster. [3Fe-4S] cluster is required as a cofactor. It depends on [4Fe-4S] cluster as a cofactor. In terms of tissue distribution, ubiquitous. Preferentially expressed in flowers and inflorescences.

It is found in the mitochondrion inner membrane. It catalyses the reaction a quinone + succinate = fumarate + a quinol. Its pathway is carbohydrate metabolism; tricarboxylic acid cycle; fumarate from succinate (eukaryal route): step 1/1. Iron-sulfur protein (IP) subunit of succinate dehydrogenase (SDH) that is involved in complex II of the mitochondrial electron transport chain and is responsible for transferring electrons from succinate to ubiquinone (coenzyme Q). The polypeptide is Succinate dehydrogenase [ubiquinone] iron-sulfur subunit 1, mitochondrial (SDH2-1) (Arabidopsis thaliana (Mouse-ear cress)).